The following is a 355-amino-acid chain: DnaJ homolog dnj-20 (355 aa).

The signal sequence occupies residues 1-21 (MRILNVSLLVLASSLVAFVEC). Residues 24–89 (DFYKILGVAK…EKRAMYDRHG (66 aa)) form the J domain.

The sequence is that of DnaJ homolog dnj-20 from Caenorhabditis elegans.